We begin with the raw amino-acid sequence, 551 residues long: Putative transport protein NTHI0043 (551 aa).

A run of 5 helical transmembrane segments spans residues 4–24 (IAIT…IGHW), 28–48 (GVGL…HFTN), 65–85 (FGLI…FFSS), 95–115 (AFAI…HKIA), and 157–177 (VSYA…MWLI). 2 RCK C-terminal domains span residues 191-275 (RFNA…IIGY) and 277-360 (VDAP…VIGN). The next 6 helical transmembrane spans lie at 370–390 (MLPV…PFYI), 402–424 (AGGP…LYWF), 438–458 (IVLF…DTLV), 463–483 (LEWM…TGIL), 492–512 (YLTI…LAFA), and 529–549 (VYPL…VLLW).

It belongs to the AAE transporter (TC 2.A.81) family. YidE subfamily.

It is found in the cell membrane. In Haemophilus influenzae (strain 86-028NP), this protein is Putative transport protein NTHI0043.